The sequence spans 298 residues: Thymidylate synthase (298 aa).

Residues Arg-25 and 159 to 160 each bind dUMP; that span reads RR. The active-site Nucleophile is Cys-179. DUMP is bound by residues 200-203, Asn-211, and 241-243; these read RSCD and HLY. (6R)-5,10-methylene-5,6,7,8-tetrahydrofolate is bound at residue Asp-203. Ala-297 is a (6R)-5,10-methylene-5,6,7,8-tetrahydrofolate binding site.

This sequence belongs to the thymidylate synthase family. Bacterial-type ThyA subfamily. In terms of assembly, homodimer.

The protein resides in the cytoplasm. It carries out the reaction dUMP + (6R)-5,10-methylene-5,6,7,8-tetrahydrofolate = 7,8-dihydrofolate + dTMP. It participates in pyrimidine metabolism; dTTP biosynthesis. Its function is as follows. Catalyzes the reductive methylation of 2'-deoxyuridine-5'-monophosphate (dUMP) to 2'-deoxythymidine-5'-monophosphate (dTMP) while utilizing 5,10-methylenetetrahydrofolate (mTHF) as the methyl donor and reductant in the reaction, yielding dihydrofolate (DHF) as a by-product. This enzymatic reaction provides an intracellular de novo source of dTMP, an essential precursor for DNA biosynthesis. The sequence is that of Thymidylate synthase from Rhodopseudomonas palustris (strain BisA53).